We begin with the raw amino-acid sequence, 101 residues long: MAKKSKIAKNEKRKEIVARYAERRAELKAIISNPNTSDEDRLDAQFELNSQPRDAAAVRVRNRDSHDGRPRGYLRKFGLSRVRMREMAHRGELPGVRKSSW.

Positions 53–72 (RDAAAVRVRNRDSHDGRPRG) are disordered. Positions 61-70 (RNRDSHDGRP) are enriched in basic and acidic residues.

This sequence belongs to the universal ribosomal protein uS14 family. In terms of assembly, part of the 30S ribosomal subunit. Contacts proteins S3 and S10.

Its function is as follows. Binds 16S rRNA, required for the assembly of 30S particles and may also be responsible for determining the conformation of the 16S rRNA at the A site. In Corynebacterium glutamicum (strain ATCC 13032 / DSM 20300 / JCM 1318 / BCRC 11384 / CCUG 27702 / LMG 3730 / NBRC 12168 / NCIMB 10025 / NRRL B-2784 / 534), this protein is Small ribosomal subunit protein uS14.